Consider the following 466-residue polypeptide: Soluble pyridine nucleotide transhydrogenase (466 aa).

36–45 (ERYHNVGGGC) is a binding site for FAD.

It belongs to the class-I pyridine nucleotide-disulfide oxidoreductase family. FAD is required as a cofactor.

Its subcellular location is the cytoplasm. The catalysed reaction is NAD(+) + NADPH = NADH + NADP(+). Its function is as follows. Conversion of NADPH, generated by peripheral catabolic pathways, to NADH, which can enter the respiratory chain for energy generation. This is Soluble pyridine nucleotide transhydrogenase from Citrobacter koseri (strain ATCC BAA-895 / CDC 4225-83 / SGSC4696).